The sequence spans 718 residues: Heat shock 70 kDa protein 6, chloroplastic (718 aa).

A chloroplast-targeting transit peptide spans 1-92 (MASSAAQIHV…IDLGTTNSAV (92 aa)). A disordered region spans residues 671 to 718 (QSLYNQPGAGGPGAGPSPGGEGASSGDSSSSKGGDGDDVIDADFTDSQ). The span at 678 to 693 (GAGGPGAGPSPGGEGA) shows a compositional bias: gly residues. The segment covering 706 to 718 (GDDVIDADFTDSQ) has biased composition (acidic residues).

It belongs to the heat shock protein 70 (TC 1.A.33) family. DnaK subfamily. Interacts with geminivirus movement protein (MP).

The protein resides in the plastid. Its subcellular location is the chloroplast stroma. Acts redundantly with HSP70-7 in the thermotolerance of germinating seeds. Plays an important role in the protein precursor import into chloroplasts. Its function is as follows. In cooperation with other chaperones, Hsp70s are key components that facilitate folding of de novo synthesized proteins, assist translocation of precursor proteins into organelles, and are responsible for degradation of damaged protein under stress conditions. This chain is Heat shock 70 kDa protein 6, chloroplastic (HSP70-6), found in Arabidopsis thaliana (Mouse-ear cress).